The following is a 169-amino-acid chain: Cell division inhibitor SulA (169 aa).

Residues 106–112 (ALRTGNY) form a ftsZ binding region. The interval 162-169 (KIHSNLYH) is lon protease binding.

The protein belongs to the SulA family. In terms of assembly, interacts with FtsZ. Is rapidly cleaved and degraded by the Lon protease once DNA damage is repaired.

Its function is as follows. Component of the SOS system and an inhibitor of cell division. Accumulation of SulA causes rapid cessation of cell division and the appearance of long, non-septate filaments. In the presence of GTP, binds a polymerization-competent form of FtsZ in a 1:1 ratio, thus inhibiting FtsZ polymerization and therefore preventing it from participating in the assembly of the Z ring. This mechanism prevents the premature segregation of damaged DNA to daughter cells during cell division. The polypeptide is Cell division inhibitor SulA (Salmonella arizonae (strain ATCC BAA-731 / CDC346-86 / RSK2980)).